A 156-amino-acid chain; its full sequence is Transcription elongation factor GreA (156 aa).

Positions 7–27 (MTQEGLDKLKLELENLKLVKR) form a coiled coil.

The protein belongs to the GreA/GreB family.

Necessary for efficient RNA polymerase transcription elongation past template-encoded arresting sites. The arresting sites in DNA have the property of trapping a certain fraction of elongating RNA polymerases that pass through, resulting in locked ternary complexes. Cleavage of the nascent transcript by cleavage factors such as GreA or GreB allows the resumption of elongation from the new 3'terminus. GreA releases sequences of 2 to 3 nucleotides. This chain is Transcription elongation factor GreA, found in Lactococcus lactis subsp. lactis (strain IL1403) (Streptococcus lactis).